Consider the following 297-residue polypeptide: TGF-beta receptor type-2 (297 aa).

The signal sequence occupies residues 1–23 (MGRGLLGGLWPLHVVLWTRIAST). Topologically, residues 24 to 166 (IPPHVPKSVN…NPDLLLVIFQ (143 aa)) are extracellular. 6 disulfides stabilise this stretch: cysteine 51/cysteine 84, cysteine 54/cysteine 71, cysteine 61/cysteine 67, cysteine 77/cysteine 101, cysteine 121/cysteine 136, and cysteine 138/cysteine 143. Asparagine 70 and asparagine 94 each carry an N-linked (GlcNAc...) asparagine glycan. The helical transmembrane segment at 167–187 (VTGVSLLPPLGIAIAVIITFY) threads the bilayer. Topologically, residues 188 to 297 (CYRVHRQQKL…KTEKDIFSDL (110 aa)) are cytoplasmic. The 54-residue stretch at 244-297 (IELDTLVGKGRFAEVYKAKLRQNTSEQFETVAVKIFPYEEYASWKTEKDIFSDL) folds into the Protein kinase domain. ATP contacts are provided by residues 250–258 (VGKGRFAEV) and lysine 277.

This sequence belongs to the protein kinase superfamily. TKL Ser/Thr protein kinase family. TGFB receptor subfamily. As to quaternary structure, homodimer. Heterohexamer; TGFB1, TGFB2 and TGFB3 homodimeric ligands assemble a functional receptor composed of two TGFBR1 and TGFBR2 heterodimers to form a ligand-receptor heterohexamer. The respective affinity of TGFRB1 and TGFRB2 for the ligands may modulate the kinetics of assembly of the receptor and may explain the different biological activities of TGFB1, TGFB2 and TGFB3. Component of a complex composed of TSC22D1 (via N-terminus), TGFBR1 and TGFBR2; the interaction between TSC22D1 and TGFBR1 is inhibited by SMAD7 and promoted by TGFB1. Interacts with DAXX. Interacts with DYNLT4. Interacts with ZFYVE9; ZFYVE9 recruits SMAD2 and SMAD3 to the TGF-beta receptor. Interacts with and is activated by SCUBE3; this interaction does not affect TGFB1-binding to TGFBR2. Interacts with VPS39; this interaction is independent of the receptor kinase activity and of the presence of TGF-beta. Interacts with CLU. It depends on Mg(2+) as a cofactor. Mn(2+) is required as a cofactor. In terms of processing, phosphorylated on a Ser/Thr residue in the cytoplasmic domain.

Its subcellular location is the cell membrane. The protein resides in the membrane raft. The enzyme catalyses L-threonyl-[receptor-protein] + ATP = O-phospho-L-threonyl-[receptor-protein] + ADP + H(+). It carries out the reaction L-seryl-[receptor-protein] + ATP = O-phospho-L-seryl-[receptor-protein] + ADP + H(+). Functionally, transmembrane serine/threonine kinase forming with the TGF-beta type I serine/threonine kinase receptor, TGFBR1, the non-promiscuous receptor for the TGF-beta cytokines TGFB1, TGFB2 and TGFB3. Transduces the TGFB1, TGFB2 and TGFB3 signal from the cell surface to the cytoplasm and is thus regulating a plethora of physiological and pathological processes including cell cycle arrest in epithelial and hematopoietic cells, control of mesenchymal cell proliferation and differentiation, wound healing, extracellular matrix production, immunosuppression and carcinogenesis. The formation of the receptor complex composed of 2 TGFBR1 and 2 TGFBR2 molecules symmetrically bound to the cytokine dimer results in the phosphorylation and the activation of TGFRB1 by the constitutively active TGFBR2. Activated TGFBR1 phosphorylates SMAD2 which dissociates from the receptor and interacts with SMAD4. The SMAD2-SMAD4 complex is subsequently translocated to the nucleus where it modulates the transcription of the TGF-beta-regulated genes. This constitutes the canonical SMAD-dependent TGF-beta signaling cascade. Also involved in non-canonical, SMAD-independent TGF-beta signaling pathways. The protein is TGF-beta receptor type-2 (TGFBR2) of Sus scrofa (Pig).